The following is a 473-amino-acid chain: Glutamate--tRNA ligase 1 (473 aa).

Positions 10–20 (PSPTGFLHIGG) match the 'HIGH' region motif. Positions 252-256 (KLSKR) match the 'KMSKS' region motif. Residue Lys-255 participates in ATP binding.

Belongs to the class-I aminoacyl-tRNA synthetase family. Glutamate--tRNA ligase type 1 subfamily. In terms of assembly, monomer.

It localises to the cytoplasm. The enzyme catalyses tRNA(Glu) + L-glutamate + ATP = L-glutamyl-tRNA(Glu) + AMP + diphosphate. Its function is as follows. Catalyzes the attachment of glutamate to tRNA(Glu) in a two-step reaction: glutamate is first activated by ATP to form Glu-AMP and then transferred to the acceptor end of tRNA(Glu). The protein is Glutamate--tRNA ligase 1 of Wolbachia pipientis wMel.